Here is a 450-residue protein sequence, read N- to C-terminus: Bifunctional apoptosis regulator (450 aa).

Basic and acidic residues predominate over residues 1-20 (MEEPQKNDLSMREQEEEHPV). Residues 1–25 (MEEPQKNDLSMREQEEEHPVRSSGP) are disordered. Over 1 to 140 (MEEPQKNDLS…PSTGRVNPQR (140 aa)) the chain is Cytoplasmic. Residues 34 to 74 (CHCCYDTLVNPTTLNCGHSFCRHCLALWWMSSKKTECPECR) form an RING-type zinc finger. The chain crosses the membrane as a helical span at residues 141 to 161 (GGGFFSGVLTALTGVAVILLV). The Extracellular portion of the chain corresponds to 162–331 (YHWRSRESEH…REPTWKQWRE (170 aa)). The SAM domain occupies 182-249 (WTMEEVVLWL…LTELERVRAL (68 aa)). Residues asparagine 232 and asparagine 308 are each glycosylated (N-linked (GlcNAc...) asparagine). Residues 332 to 352 (FLVKYSFLPYQLIAEFAWDWL) form a helical membrane-spanning segment. Topologically, residues 353 to 360 (EVHYWTSR) are cytoplasmic. A helical transmembrane segment spans residues 361-381 (FLIVNAVLLSVLELFSFWRIW). Over 382-404 (SRSELKTVPQRMWSHFWKVSTQG) the chain is Extracellular. A helical transmembrane segment spans residues 405–425 (LFMAMFWPLIPQFVCNCLFYW). At 426-450 (ALYFNPIINIDLVVKEVRRLETQVL) the chain is on the cytoplasmic side.

As to quaternary structure, interacts with CASP8, BCL2 and BCL2L1 through SAM domain and also with HIP1, IFT57, ESRRBL1 and BCAP31. Interacts with NGFR; this interaction inhibits NF-kappa-B and JNK-related signaling pathways. Post-translationally, mediates RING-dependent self-ubiquitination leading to proteasomal degradation.

It localises to the endoplasmic reticulum membrane. It catalyses the reaction S-ubiquitinyl-[E2 ubiquitin-conjugating enzyme]-L-cysteine + [acceptor protein]-L-lysine = [E2 ubiquitin-conjugating enzyme]-L-cysteine + N(6)-ubiquitinyl-[acceptor protein]-L-lysine.. Functionally, membrane-bound E3 ubiquitin ligase that plays a role in several processes including apoptosis regulation or reticulum endoplasmic stress. Has anti-apoptotic activity, both for apoptosis triggered via death-receptors and via mitochondrial factors. Contributes to the dynamic control of IRE1/ERN1 signaling during ER stress by inducing BAX inhibitor 1/TMBIM6 proteasomal degradation. Promotes the activation of TGF-beta signaling by mediating the 'Lys-63'-linked ubiquitination of TGFBR1 which is critical to activate the pathway. Together with NGFR, negatively regulates NF-kappa-B and JNK-related signaling pathways. Promotes the proteasome-mediated degradation of PNPLA3, a protein involveld in lipid metabolism. The protein is Bifunctional apoptosis regulator (Bfar) of Mus musculus (Mouse).